Consider the following 482-residue polypeptide: tRNA sulfurtransferase (482 aa).

The THUMP domain maps to leucine 61–arginine 165. ATP is bound by residues leucine 183 to isoleucine 184, lysine 265, glycine 287, and glutamine 296. The cysteines at positions 344 and 456 are disulfide-linked. The Rhodanese domain maps to phenylalanine 404–proline 482. Catalysis depends on cysteine 456, which acts as the Cysteine persulfide intermediate.

Belongs to the ThiI family.

Its subcellular location is the cytoplasm. The catalysed reaction is [ThiI sulfur-carrier protein]-S-sulfanyl-L-cysteine + a uridine in tRNA + 2 reduced [2Fe-2S]-[ferredoxin] + ATP + H(+) = [ThiI sulfur-carrier protein]-L-cysteine + a 4-thiouridine in tRNA + 2 oxidized [2Fe-2S]-[ferredoxin] + AMP + diphosphate. The enzyme catalyses [ThiS sulfur-carrier protein]-C-terminal Gly-Gly-AMP + S-sulfanyl-L-cysteinyl-[cysteine desulfurase] + AH2 = [ThiS sulfur-carrier protein]-C-terminal-Gly-aminoethanethioate + L-cysteinyl-[cysteine desulfurase] + A + AMP + 2 H(+). It participates in cofactor biosynthesis; thiamine diphosphate biosynthesis. Its function is as follows. Catalyzes the ATP-dependent transfer of a sulfur to tRNA to produce 4-thiouridine in position 8 of tRNAs, which functions as a near-UV photosensor. Also catalyzes the transfer of sulfur to the sulfur carrier protein ThiS, forming ThiS-thiocarboxylate. This is a step in the synthesis of thiazole, in the thiamine biosynthesis pathway. The sulfur is donated as persulfide by IscS. The sequence is that of tRNA sulfurtransferase from Escherichia coli (strain K12 / MC4100 / BW2952).